Reading from the N-terminus, the 50-residue chain is HLLQFGDLIDKIAGRSGFWYYGFYGCYCGLGGRGRPQDATDRCCFVHDCC.

Tyr27, Gly29, and Gly31 together coordinate Ca(2+). Residues Cys28 and Cys44 are joined by a disulfide bond. The active site involves His47. A Ca(2+)-binding site is contributed by Asp48.

Belongs to the phospholipase A2 family. Group II subfamily. D49 sub-subfamily. As to quaternary structure, monomer. Requires Ca(2+) as cofactor. In terms of tissue distribution, expressed by the venom gland.

The protein resides in the secreted. It carries out the reaction a 1,2-diacyl-sn-glycero-3-phosphocholine + H2O = a 1-acyl-sn-glycero-3-phosphocholine + a fatty acid + H(+). In terms of biological role, snake venom phospholipase A2 (PLA2) that displays a potent enzymatic activity as measured by indirect hemolysis of red blood cells. Is neither lethal when injected into mice nor does it present anticoagulant activity. Displays a moderate inhibitory activity on the aggregation of platelets induced by low levels of ADP, thrombin and arachidonate. In contrast, strongly inhibits platelet aggregation induced by high doses of collagen. Shows myotoxic activity, increases the plasma creatine-kinase activity and induces edema and myonecrosis of mouse skeletal muscles. PLA2 catalyzes the calcium-dependent hydrolysis of the 2-acyl groups in 3-sn-phosphoglycerides. The polypeptide is Acidic phospholipase A2 1 (Lachesis muta muta (Bushmaster)).